The following is a 69-amino-acid chain: UPF0434 protein Rmet_0534 (69 aa).

Belongs to the UPF0434 family.

The chain is UPF0434 protein Rmet_0534 from Cupriavidus metallidurans (strain ATCC 43123 / DSM 2839 / NBRC 102507 / CH34) (Ralstonia metallidurans).